The primary structure comprises 252 residues: Fructose-1,6-bisphosphatase/inositol-1-monophosphatase (252 aa).

Mg(2+)-binding residues include E65, D81, I83, and D84. Substrate contacts are provided by residues 84-86 (DGS), R170, F175, and R194. D201 is a Mg(2+) binding site.

Belongs to the inositol monophosphatase superfamily. FBPase class 4 family. As to quaternary structure, homodimer. The cofactor is Mg(2+).

It carries out the reaction beta-D-fructose 1,6-bisphosphate + H2O = beta-D-fructose 6-phosphate + phosphate. The catalysed reaction is a myo-inositol phosphate + H2O = myo-inositol + phosphate. With respect to regulation, IMPase activity is inhibited by Ca(2+) and Zn(2+). In contrast to mammalian I-1-P phosphatases, is not inhibited by Li(+) up to 100 mM. Phosphatase with broad specificity; it can dephosphorylate fructose 1,6-bisphosphate, both D and L isomers of inositol-1-phosphate (I-1-P), 2'-AMP, pNPP, beta-glycerol phosphate, and alpha-D-glucose-1-phosphate. Cannot hydrolyze glucose-6-phosphate, fructose-6-phosphate, NAD(+) or 5'-AMP. May be involved in the biosynthesis of a unique osmolyte, di-myo-inositol 1,1-phosphate. The polypeptide is Fructose-1,6-bisphosphatase/inositol-1-monophosphatase (suhB) (Methanocaldococcus jannaschii (strain ATCC 43067 / DSM 2661 / JAL-1 / JCM 10045 / NBRC 100440) (Methanococcus jannaschii)).